The following is a 443-amino-acid chain: ATP-dependent protease ATPase subunit HslU (443 aa).

ATP contacts are provided by residues Ile-18 and 60–65; that span reads GVGKTE. Residues 139 to 161 are disordered; that stretch reads ARDSGFDANPSEENNATRQKFRK. Asp-256, Glu-321, and Arg-393 together coordinate ATP.

It belongs to the ClpX chaperone family. HslU subfamily. As to quaternary structure, a double ring-shaped homohexamer of HslV is capped on each side by a ring-shaped HslU homohexamer. The assembly of the HslU/HslV complex is dependent on binding of ATP.

Its subcellular location is the cytoplasm. Its function is as follows. ATPase subunit of a proteasome-like degradation complex; this subunit has chaperone activity. The binding of ATP and its subsequent hydrolysis by HslU are essential for unfolding of protein substrates subsequently hydrolyzed by HslV. HslU recognizes the N-terminal part of its protein substrates and unfolds these before they are guided to HslV for hydrolysis. In Nitrosomonas eutropha (strain DSM 101675 / C91 / Nm57), this protein is ATP-dependent protease ATPase subunit HslU.